The primary structure comprises 122 residues: MARIAGVNIPTNKRVIIALQYIHGIGPKFAQEITKKVGIPIGRRVHELSDAEVLQIREAIDQGYQVEGDLRREVAMNVKRLMDLGCYRGLRHRRSLPVRGQRTHTNARTRKGPAKAIAGKKK.

Residues Pro-97–Lys-122 are disordered.

Belongs to the universal ribosomal protein uS13 family. As to quaternary structure, part of the 30S ribosomal subunit. Forms a loose heterodimer with protein S19. Forms two bridges to the 50S subunit in the 70S ribosome.

Functionally, located at the top of the head of the 30S subunit, it contacts several helices of the 16S rRNA. In the 70S ribosome it contacts the 23S rRNA (bridge B1a) and protein L5 of the 50S subunit (bridge B1b), connecting the 2 subunits; these bridges are implicated in subunit movement. Contacts the tRNAs in the A and P-sites. This is Small ribosomal subunit protein uS13 from Bartonella henselae (strain ATCC 49882 / DSM 28221 / CCUG 30454 / Houston 1) (Rochalimaea henselae).